The chain runs to 423 residues: Growth hormone-releasing hormone receptor (423 aa).

Residues 1 to 22 form the signal peptide; that stretch reads MDGLMWATRILCLLSLCGVTLG. The Extracellular portion of the chain corresponds to 23–130; it reads HLHLECDFIT…KEKSYFSTVK (108 aa). 3 cysteine pairs are disulfide-bonded: Cys41–Cys64, Cys55–Cys96, and Cys78–Cys112. Residues Asn49 and Asn50 are each glycosylated (N-linked (GlcNAc...) asparagine). Residues 131-151 form a helical membrane-spanning segment; it reads IIYTTGHSISIVALCVAIAIL. Residues 152-167 are Cytoplasmic-facing; the sequence is VALRRLHCPRNYIHTQ. Residues 168–188 form a helical membrane-spanning segment; it reads LFATFILKASAVFLKDAAIFQ. Residues 189–210 lie on the Extracellular side of the membrane; it reads GDSTDHCSMSTVLCKVSVAISH. The chain crosses the membrane as a helical span at residues 211–231; that stretch reads LATMTNFSWLLAEAVYLSCLL. Over 232-240 the chain is Cytoplasmic; it reads ASTSPRSKP. A helical membrane pass occupies residues 241–261; that stretch reads AFWWLVLAGWGLPVLCTGTWV. At 262–283 the chain is on the extracellular side; the sequence is GCKLAFEDTECWDLDNSSPCWW. The helical transmembrane segment at 284–304 threads the bilayer; sequence IIKGPIVLSVGVNFGLFLNII. Topologically, residues 305-331 are cytoplasmic; that stretch reads CILLRKLEPAQGGLHTRAQYWRLSKST. The helical transmembrane segment at 332 to 352 threads the bilayer; that stretch reads LLLIPLFGIHYIIFNFLPDSA. Residues 353–357 are Extracellular-facing; sequence GLDIR. The chain crosses the membrane as a helical span at residues 358-378; sequence VPLELGLGSFQGFIVAVLYCF. At 379–423 the chain is on the cytoplasmic side; sequence LNQEVRTEISRKWYGHDPELLPARRTCTEWTTPPRSRLKVLTSEC.

It belongs to the G-protein coupled receptor 2 family. In terms of tissue distribution, pituitary gland.

It localises to the cell membrane. Its function is as follows. Receptor for GRF, coupled to G proteins which activate adenylyl cyclase. Stimulates somatotroph cell growth, growth hormone gene transcription and growth hormone secretion. This Mus musculus (Mouse) protein is Growth hormone-releasing hormone receptor (Ghrhr).